We begin with the raw amino-acid sequence, 142 residues long: Hemoglobin subunit pi (142 aa).

The Globin domain maps to 2–142 (TLTQAEKAAV…VSSVLTEKYR (141 aa)). Heme b-binding residues include histidine 59 and histidine 88.

Belongs to the globin family.

Its function is as follows. The pi' chain is the counterpart of the alpha chain in the major early embryonic hemoglobin P. This chain is Hemoglobin subunit pi, found in Cairina moschata (Muscovy duck).